Reading from the N-terminus, the 269-residue chain is Serine/arginine-rich splicing factor 5 (269 aa).

The region spanning 4–74 (CRVFIGRLNP…ERVTIEHARA (71 aa)) is the RRM 1 domain. The disordered stretch occupies residues 73–105 (RARSRGGRGRGRYSDRFSSRRPRNDRRNAPPVR). Basic residues predominate over residues 74-83 (ARSRGGRGRG). A Phosphoserine modification is found at serine 86. In terms of domain architecture, RRM 2 spans 108 to 189 (NRLIVENLSS…SKRHRSRSRS (82 aa)). Lysine 167 carries the post-translational modification N6-acetyllysine. Residues 174 to 269 (IKLIEGSKRH…SRSRSVDSGN (96 aa)) form a disordered region. A compositionally biased stretch (basic residues) spans 181 to 226 (KRHRSRSRSRSRTRSSSRSRSRSRSRRSKSYSRSRSRSRSRSKSRS). Phosphoserine is present on residues serine 224, serine 226, serine 230, serine 247, and serine 250. A compositionally biased stretch (low complexity) spans 239-251 (RGSSSRSKSPASV).

This sequence belongs to the splicing factor SR family. As to quaternary structure, found in a pre-mRNA splicing complex with SRSF4/SFRS4, SRSF5/SFRS5, SNRNP70, SNRPA1, SRRM1 and SRRM2. Interacts with RBMY; the interaction inhibits SRSF5 pre-mRNA splicing. Interacts (via RS domain) with PHF5A (via N-terminus). In terms of processing, extensively phosphorylated on serine residues in the RS domain.

It localises to the nucleus. Its function is as follows. May be required for progression through G1 and entry into S phase of cell growth. May play a regulatory role in pre-mRNA splicing. Autoregulates its own expression. Plays a role in constitutive splicing and can modulate the selection of alternative splice sites. This chain is Serine/arginine-rich splicing factor 5 (Srsf5), found in Mus musculus (Mouse).